Reading from the N-terminus, the 344-residue chain is Acyl-CoA ligase clz12 (344 aa).

2 AMP-binding regions span residues 2 to 239 and 248 to 322; these read VQRS…IIKV and ELET…PSGK.

The protein belongs to the ATP-dependent AMP-binding enzyme family.

Its pathway is secondary metabolite biosynthesis. Its function is as follows. Acyl-CoA ligase; part of the gene cluster that mediates the biosynthesis of squalestatin S1 (SQS1, also known as zaragozic acid A), a heavily oxidized fungal polyketide that offers potent cholesterol lowering activity by targeting squalene synthase (SS). SQS1 is composed of a 2,8-dioxobicyclic[3.2.1]octane-3,4,5-tricarboxyclic acid core that is connected to two lipophilic polyketide arms. These initial steps feature the priming of an unusual benzoic acid starter unit onto the highly reducing polyketide synthase clz14, followed by oxaloacetate extension and product release to generate a tricarboxylic acid containing product. The phenylalanine ammonia lyase (PAL) clz10 and the acyl-CoA ligase clz12 are involved in transforming phenylalanine into benzoyl-CoA. The citrate synthase-like protein clz17 is involved in connecting the C-alpha-carbons of the hexaketide chain and oxaloacetate to afford the tricarboxylic acid unit. The potential hydrolytic enzymes, clz11 and clz13, are in close proximity to pks2 and may participate in product release. On the other side, the tetraketide arm is synthesized by a the squalestatin tetraketide synthase clz2 and enzymatically esterified to the core in the last biosynthetic step, by the acetyltransferase clz6. The biosynthesis of the tetraketide must involve 3 rounds of chain extension. After the first and second rounds methyl-transfer occurs, and in all rounds of extension the ketoreductase and dehydratase are active. The enoyl reductase and C-MeT of clz2 are not active in the final round of extension. The acetyltransferase clz6 appears to have a broad substrate selectivity for its acyl CoA substrate, allowing the in vitro synthesis of novel squalestatins. The biosynthesis of SQS1 requires several oxidative steps likely performed by oxidoreductases clz3, clz15 and clz16. Finally, in support of the identification of the cluster as being responsible for SQS1 production, the cluster contains a gene encoding a putative squalene synthase (SS) clz20, suggesting a likely mechanism for self-resistance. In Cochliobolus lunatus (Filamentous fungus), this protein is Acyl-CoA ligase clz12.